Consider the following 267-residue polypeptide: Putative transcription factor Ovo-like 1 (267 aa).

C2H2-type zinc fingers lie at residues 118–140 (FTCHICQKAFTYQRMLNRHMKCH), 146–168 (HLCTYCGKGFNDTFDLKRHVRTH), 174–197 (YKCSLCDKAFTQRCSLESHLKKIH), and 213–235 (YVCEECGCTSESQEGHVLHLKEH).

The protein localises to the nucleus. In terms of biological role, putative transcription factor. Involved in hair formation and spermatogenesis. May function in the differentiation and/or maintenance of the urogenital system. This Bos taurus (Bovine) protein is Putative transcription factor Ovo-like 1 (OVOL1).